Consider the following 200-residue polypeptide: Dephospho-CoA kinase (200 aa).

The 198-residue stretch at 3-200 folds into the DPCK domain; sequence VLGLTGSIGM…LSGKPAAATR (198 aa). Position 11–16 (11–16) interacts with ATP; that stretch reads GMGKTT.

It belongs to the CoaE family.

Its subcellular location is the cytoplasm. It carries out the reaction 3'-dephospho-CoA + ATP = ADP + CoA + H(+). It functions in the pathway cofactor biosynthesis; coenzyme A biosynthesis; CoA from (R)-pantothenate: step 5/5. In terms of biological role, catalyzes the phosphorylation of the 3'-hydroxyl group of dephosphocoenzyme A to form coenzyme A. In Brucella melitensis biotype 1 (strain ATCC 23456 / CCUG 17765 / NCTC 10094 / 16M), this protein is Dephospho-CoA kinase.